A 931-amino-acid polypeptide reads, in one-letter code: Phosphoenolpyruvate carboxylase (931 aa).

Residues histidine 158 and lysine 593 contribute to the active site.

Belongs to the PEPCase type 1 family. It depends on Mg(2+) as a cofactor.

The catalysed reaction is oxaloacetate + phosphate = phosphoenolpyruvate + hydrogencarbonate. In terms of biological role, forms oxaloacetate, a four-carbon dicarboxylic acid source for the tricarboxylic acid cycle. The sequence is that of Phosphoenolpyruvate carboxylase from Azorhizobium caulinodans (strain ATCC 43989 / DSM 5975 / JCM 20966 / LMG 6465 / NBRC 14845 / NCIMB 13405 / ORS 571).